The chain runs to 490 residues: Betaine aldehyde dehydrogenase (490 aa).

Residue D93 participates in K(+) binding. 150–152 is an NAD(+) binding site; it reads GAW. The Charge relay system role is filled by K162. 176–179 serves as a coordination point for NAD(+); it reads KPSE. V180 is a binding site for K(+). Residue 230–233 participates in NAD(+) binding; that stretch reads GVKT. L246 is a binding site for K(+). Catalysis depends on E252, which acts as the Proton acceptor. Positions 254, 286, and 387 each coordinate NAD(+). C286 acts as the Nucleophile in catalysis. C286 is modified (cysteine sulfenic acid (-SOH)). 2 residues coordinate K(+): K457 and G460. E464 serves as the catalytic Charge relay system.

The protein belongs to the aldehyde dehydrogenase family. In terms of assembly, dimer of dimers. K(+) is required as a cofactor.

It carries out the reaction betaine aldehyde + NAD(+) + H2O = glycine betaine + NADH + 2 H(+). The protein operates within amine and polyamine biosynthesis; betaine biosynthesis via choline pathway; betaine from betaine aldehyde: step 1/1. Functionally, involved in the biosynthesis of the osmoprotectant glycine betaine. Catalyzes the irreversible oxidation of betaine aldehyde to the corresponding acid. In Serratia proteamaculans (strain 568), this protein is Betaine aldehyde dehydrogenase.